The sequence spans 448 residues: UDP-N-acetylmuramate--L-alanine ligase (448 aa).

118–124 (GTHGKTT) serves as a coordination point for ATP.

The protein belongs to the MurCDEF family.

The protein resides in the cytoplasm. The catalysed reaction is UDP-N-acetyl-alpha-D-muramate + L-alanine + ATP = UDP-N-acetyl-alpha-D-muramoyl-L-alanine + ADP + phosphate + H(+). It functions in the pathway cell wall biogenesis; peptidoglycan biosynthesis. Its function is as follows. Cell wall formation. The polypeptide is UDP-N-acetylmuramate--L-alanine ligase (Flavobacterium psychrophilum (strain ATCC 49511 / DSM 21280 / CIP 103535 / JIP02/86)).